A 235-amino-acid polypeptide reads, in one-letter code: Thiamine import ATP-binding protein ThiQ (235 aa).

An ABC transporter domain is found at 2-230 (LKLIDITWLY…QASASALLGI (229 aa)). 32-39 (GPSGAGKS) is an ATP binding site.

This sequence belongs to the ABC transporter superfamily. Thiamine importer (TC 3.A.1.19.1) family. In terms of assembly, the complex is composed of two ATP-binding proteins (ThiQ), two transmembrane proteins (ThiP) and a solute-binding protein (ThiB).

It localises to the cell inner membrane. The catalysed reaction is thiamine(out) + ATP + H2O = thiamine(in) + ADP + phosphate + H(+). In terms of biological role, part of the ABC transporter complex ThiBPQ involved in thiamine import. Responsible for energy coupling to the transport system. Is also involved in thiamine pyrophosphate (TPP) transport. The polypeptide is Thiamine import ATP-binding protein ThiQ (Salmonella typhimurium (strain LT2 / SGSC1412 / ATCC 700720)).